The chain runs to 156 residues: 6,7-dimethyl-8-ribityllumazine synthase (156 aa).

Residues F22, 57–59 (AYE), and 81–83 (TVI) each bind 5-amino-6-(D-ribitylamino)uracil. Residue 86–87 (GT) coordinates (2S)-2-hydroxy-3-oxobutyl phosphate. H89 serves as the catalytic Proton donor. F114 lines the 5-amino-6-(D-ribitylamino)uracil pocket. A (2S)-2-hydroxy-3-oxobutyl phosphate-binding site is contributed by R128.

The protein belongs to the DMRL synthase family. In terms of assembly, forms an icosahedral capsid composed of 60 subunits, arranged as a dodecamer of pentamers.

It carries out the reaction (2S)-2-hydroxy-3-oxobutyl phosphate + 5-amino-6-(D-ribitylamino)uracil = 6,7-dimethyl-8-(1-D-ribityl)lumazine + phosphate + 2 H2O + H(+). Its pathway is cofactor biosynthesis; riboflavin biosynthesis; riboflavin from 2-hydroxy-3-oxobutyl phosphate and 5-amino-6-(D-ribitylamino)uracil: step 1/2. Its function is as follows. Catalyzes the formation of 6,7-dimethyl-8-ribityllumazine by condensation of 5-amino-6-(D-ribitylamino)uracil with 3,4-dihydroxy-2-butanone 4-phosphate. This is the penultimate step in the biosynthesis of riboflavin. This chain is 6,7-dimethyl-8-ribityllumazine synthase, found in Photorhabdus laumondii subsp. laumondii (strain DSM 15139 / CIP 105565 / TT01) (Photorhabdus luminescens subsp. laumondii).